A 760-amino-acid polypeptide reads, in one-letter code: Xaa-Pro dipeptidyl-peptidase (760 aa).

Residues Ser349, Asp469, and His499 each act as charge relay system in the active site.

It belongs to the peptidase S15 family. Homodimer.

It localises to the cytoplasm. The catalysed reaction is Hydrolyzes Xaa-Pro-|- bonds to release unblocked, N-terminal dipeptides from substrates including Ala-Pro-|-p-nitroanilide and (sequentially) Tyr-Pro-|-Phe-Pro-|-Gly-Pro-|-Ile.. Its function is as follows. Removes N-terminal dipeptides sequentially from polypeptides having unsubstituted N-termini provided that the penultimate residue is proline. The protein is Xaa-Pro dipeptidyl-peptidase of Streptococcus pyogenes serotype M18 (strain MGAS8232).